Here is a 316-residue protein sequence, read N- to C-terminus: Acetylglutamate kinase (316 aa).

Substrate is bound by residues 76-77, arginine 98, and asparagine 207; that span reads GG.

The protein belongs to the acetylglutamate kinase family. ArgB subfamily.

The protein resides in the cytoplasm. It carries out the reaction N-acetyl-L-glutamate + ATP = N-acetyl-L-glutamyl 5-phosphate + ADP. The protein operates within amino-acid biosynthesis; L-arginine biosynthesis; N(2)-acetyl-L-ornithine from L-glutamate: step 2/4. In terms of biological role, catalyzes the ATP-dependent phosphorylation of N-acetyl-L-glutamate. In Paenarthrobacter aurescens (strain TC1), this protein is Acetylglutamate kinase.